A 398-amino-acid chain; its full sequence is Serpin-Z2A (398 aa).

The RCL stretch occupies residues 343 to 367 (GTEAAAATIAKAVLLSASPPSDMDF).

The protein belongs to the serpin family.

Its function is as follows. Inhibits chymotrypsin and cathepsin G in vitro. The chain is Serpin-Z2A from Triticum aestivum (Wheat).